Reading from the N-terminus, the 237-residue chain is uncharacterized protein (237 aa).

Residues 1-26 form a disordered region; sequence MKRIRDVLSHENSNNTNYSDTNDTDY. Low complexity predominate over residues 12 to 21; that stretch reads NSNNTNYSDT.

This sequence belongs to the mimivirus R160 family.

This is an uncharacterized protein from Acanthamoeba polyphaga mimivirus (APMV).